The chain runs to 270 residues: Tetraspanin-14 (270 aa).

The Cytoplasmic segment spans residues 1–17 (MHYYRYSNAKVSCWYKY). Residues 18-38 (LLFSYNIIFWLAGVVFLGVGL) form a helical membrane-spanning segment. Topologically, residues 39–61 (WAWSEKGVLSDLTKVTRMHGIDP) are extracellular. A helical membrane pass occupies residues 62–82 (VVLVLMVGVVMFTLGFAGCVG). Residues 83-92 (ALRENICLLN) lie on the Cytoplasmic side of the membrane. The chain crosses the membrane as a helical span at residues 93–113 (FFCGTIVLIFFLELAVAVLAF). The Extracellular segment spans residues 114-232 (LFQDWVRDRF…QALESWLPRN (119 aa)). Residues 114 to 232 (LFQDWVRDRF…QALESWLPRN (119 aa)) are necessary and sufficient for interaction with ADAM10. 4 disulfides stabilise this stretch: Cys-153–Cys-221, Cys-154–Cys-186, Cys-170–Cys-180, and Cys-187–Cys-200. Asn-169 carries N-linked (GlcNAc...) asparagine glycosylation. Residues 233–253 (IYIVAGVFIAISLLQIFGIFL) form a helical membrane-spanning segment. Residues 254-270 (ARTLISDIEAVKAGHHF) are Cytoplasmic-facing.

The protein belongs to the tetraspanin (TM4SF) family. Interacts with ADAM10; the interaction promotes ADAM10 maturation and cell surface expression.

Its subcellular location is the cell membrane. Its function is as follows. Part of TspanC8 subgroup, composed of 6 members that interact with the transmembrane metalloprotease ADAM10. This interaction is required for ADAM10 exit from the endoplasmic reticulum and for enzymatic maturation and trafficking to the cell surface as well as substrate specificity. Different TspanC8/ADAM10 complexes have distinct substrates. Negatively regulates ADAM10-mediated cleavage of GP6. Promotes ADAM10-mediated cleavage of CDH5. This is Tetraspanin-14 from Homo sapiens (Human).